The chain runs to 751 residues: Serine/threonine-protein kinase-like protein CCR4 (751 aa).

Positions 1-31 are cleaved as a signal peptide; that stretch reads MALTISISCFSSYFVSLLLLVLSSFSFVCFS. Topologically, residues 32–366 are extracellular; it reads LSTVSISHIS…NKTWSRRNIA (335 aa). N-linked (GlcNAc...) asparagine glycans are attached at residues asparagine 42, asparagine 51, asparagine 98, asparagine 243, asparagine 254, asparagine 283, and asparagine 357. A helical membrane pass occupies residues 367–387; the sequence is FLVVGCVGTFSLLLVISFLIF. The Cytoplasmic portion of the chain corresponds to 388-751; it reads KSHCRCRVHD…TETVSRSNTY (364 aa). Residues 443–733 enclose the Protein kinase domain; it reads FSVRFHLGIG…EVVSKLESAL (291 aa). ATP is bound by residues 449–457 and lysine 471; that span reads LGIGSFGSV. Aspartate 579 serves as the catalytic Proton acceptor.

It belongs to the protein kinase superfamily. Ser/Thr protein kinase family. In terms of assembly, homodimer. Expressed in roots, leaves, especially in trichomes, shoot apical meristems (SAM), and, to a lower extent, in floral buds.

It localises to the membrane. The catalysed reaction is L-seryl-[protein] + ATP = O-phospho-L-seryl-[protein] + ADP + H(+). It catalyses the reaction L-threonyl-[protein] + ATP = O-phospho-L-threonyl-[protein] + ADP + H(+). The polypeptide is Serine/threonine-protein kinase-like protein CCR4 (CCR4) (Arabidopsis thaliana (Mouse-ear cress)).